The following is a 150-amino-acid chain: Small ribosomal subunit protein eS19 (150 aa).

This sequence belongs to the eukaryotic ribosomal protein eS19 family. In terms of assembly, part of the 30S ribosomal subunit.

Its function is as follows. May be involved in maturation of the 30S ribosomal subunit. The sequence is that of Small ribosomal subunit protein eS19 from Pyrococcus horikoshii (strain ATCC 700860 / DSM 12428 / JCM 9974 / NBRC 100139 / OT-3).